The sequence spans 129 residues: Small ribosomal subunit protein uS8mz (129 aa).

Belongs to the universal ribosomal protein uS8 family. Component of the mitochondrial ribosome small subunit.

It localises to the mitochondrion. The chain is Small ribosomal subunit protein uS8mz (RPS15AB) from Arabidopsis thaliana (Mouse-ear cress).